Here is a 284-residue protein sequence, read N- to C-terminus: NAD kinase (284 aa).

The active-site Proton acceptor is the Asp70. Residues 70–71, 139–140, Lys167, Asp169, Leu177, 180–185, and Gln236 each bind NAD(+); these read DG, NE, and TAYNLS.

The protein belongs to the NAD kinase family. A divalent metal cation serves as cofactor.

It is found in the cytoplasm. It catalyses the reaction NAD(+) + ATP = ADP + NADP(+) + H(+). Its function is as follows. Involved in the regulation of the intracellular balance of NAD and NADP, and is a key enzyme in the biosynthesis of NADP. Catalyzes specifically the phosphorylation on 2'-hydroxyl of the adenosine moiety of NAD to yield NADP. This chain is NAD kinase, found in Helicobacter pylori (strain Shi470).